The sequence spans 360 residues: Peptide chain release factor 1 (360 aa).

Gln-235 is subject to N5-methylglutamine. A compositionally biased stretch (basic and acidic residues) spans Ala-291–Arg-308. A disordered region spans residues Ala-291–Phe-312.

Belongs to the prokaryotic/mitochondrial release factor family. Methylated by PrmC. Methylation increases the termination efficiency of RF1.

It localises to the cytoplasm. In terms of biological role, peptide chain release factor 1 directs the termination of translation in response to the peptide chain termination codons UAG and UAA. In Yersinia pseudotuberculosis serotype O:1b (strain IP 31758), this protein is Peptide chain release factor 1.